The primary structure comprises 168 residues: Disulfide bond formation protein B 1 (168 aa).

The Cytoplasmic segment spans residues 1-14 (MNELTSRLNRERRF). Residues 15–31 (LVLLGVICLALIGGALY) form a helical membrane-spanning segment. The Periplasmic segment spans residues 32-49 (MQVVLGEAPCPLCILQRY). Cys-41 and Cys-44 are oxidised to a cystine. A helical membrane pass occupies residues 50-65 (ALLFIAIFAFIAAAMP). Residues 66–72 (GRKSLTF) are Cytoplasmic-facing. The chain crosses the membrane as a helical span at residues 73–89 (FEVLVVLSAIGGIVAAG). Residues 90–144 (NHVYILANPMVSCGIDTLQPIVDDLPLAKLWPLAFQVDGFCSTPYPPILGLSLAQ) lie on the Periplasmic side of the membrane. Cysteines 102 and 130 form a disulfide. A helical membrane pass occupies residues 145–163 (WALVAFVLTTVLVPLGIYR). Residues 164–168 (NRRRG) are Cytoplasmic-facing.

It belongs to the DsbB family.

The protein localises to the cell inner membrane. Its function is as follows. Required for disulfide bond formation in some periplasmic proteins. Acts by oxidizing the DsbA protein. The protein is Disulfide bond formation protein B 1 of Pseudomonas entomophila (strain L48).